Here is a 407-residue protein sequence, read N- to C-terminus: RING-H2 finger protein ATL43 (407 aa).

A signal peptide spans 1–22; sequence MSSSSLILLFSTLSLFLNVSLA. The helical transmembrane segment at 57–77 threads the bilayer; that stretch reads GIAVVIAVLTAFFSLTFLLLL. The RING-type; atypical zinc-finger motif lies at 146–188; that stretch reads CAVCLARFEPTEVLRLLPKCKHAFHVECVDTWLDAHSTCPLCR.

The protein belongs to the RING-type zinc finger family. ATL subfamily.

It localises to the membrane. The enzyme catalyses S-ubiquitinyl-[E2 ubiquitin-conjugating enzyme]-L-cysteine + [acceptor protein]-L-lysine = [E2 ubiquitin-conjugating enzyme]-L-cysteine + N(6)-ubiquitinyl-[acceptor protein]-L-lysine.. It participates in protein modification; protein ubiquitination. The polypeptide is RING-H2 finger protein ATL43 (ATL43) (Arabidopsis thaliana (Mouse-ear cress)).